We begin with the raw amino-acid sequence, 218 residues long: Ribose-5-phosphate isomerase A (218 aa).

Residues 28–31 (TGST), 81–84 (DGAD), and 94–97 (KGGG) contribute to the substrate site. Glu103 functions as the Proton acceptor in the catalytic mechanism. Substrate is bound at residue Lys121.

The protein belongs to the ribose 5-phosphate isomerase family. As to quaternary structure, homodimer.

It carries out the reaction aldehydo-D-ribose 5-phosphate = D-ribulose 5-phosphate. It participates in carbohydrate degradation; pentose phosphate pathway; D-ribose 5-phosphate from D-ribulose 5-phosphate (non-oxidative stage): step 1/1. In terms of biological role, catalyzes the reversible conversion of ribose-5-phosphate to ribulose 5-phosphate. This chain is Ribose-5-phosphate isomerase A, found in Methylococcus capsulatus (strain ATCC 33009 / NCIMB 11132 / Bath).